A 194-amino-acid chain; its full sequence is RNA polymerase II subunit A C-terminal domain phosphatase SSU72 like protein 3 (194 aa).

Belongs to the SSU72 phosphatase family.

It localises to the nucleus. The catalysed reaction is O-phospho-L-seryl-[protein] + H2O = L-seryl-[protein] + phosphate. It carries out the reaction O-phospho-L-threonyl-[protein] + H2O = L-threonyl-[protein] + phosphate. Protein phosphatase that catalyzes the dephosphorylation of the C-terminal domain of RNA polymerase II. Plays a role in RNA processing and termination. This chain is RNA polymerase II subunit A C-terminal domain phosphatase SSU72 like protein 3, found in Homo sapiens (Human).